Consider the following 430-residue polypeptide: Asparagine--tRNA ligase (430 aa).

Belongs to the class-II aminoacyl-tRNA synthetase family. In terms of assembly, homodimer.

The protein localises to the cytoplasm. The enzyme catalyses tRNA(Asn) + L-asparagine + ATP = L-asparaginyl-tRNA(Asn) + AMP + diphosphate + H(+). The chain is Asparagine--tRNA ligase from Staphylococcus aureus (strain USA300).